The sequence spans 321 residues: Glucokinase (321 aa).

8 to 13 contacts ATP; sequence GDVGGT.

The protein belongs to the bacterial glucokinase family.

It localises to the cytoplasm. The catalysed reaction is D-glucose + ATP = D-glucose 6-phosphate + ADP + H(+). The polypeptide is Glucokinase (Pectobacterium atrosepticum (strain SCRI 1043 / ATCC BAA-672) (Erwinia carotovora subsp. atroseptica)).